The following is a 563-amino-acid chain: Efflux pump FUS6 (563 aa).

The segment at 1–30 (MPQPDKMAAVNNAMPQPAPEKSLSSDPQPE) is disordered. Transmembrane regions (helical) follow at residues 39-59 (WLIFVAIALTTFLAALDTSII), 75-95 (LYVWIIDAYLLASTATIPIFA), 105-125 (SLTLIAVCIFTLGSGLCGGAH), 138-158 (GIGGGGILTMSEIVVCDMVSI), and 167-187 (IIGGVWAIAAVVAPVMGGAFA). The N-linked (GlcNAc...) asparagine glycan is linked to asparagine 189. Helical transmembrane passes span 194 to 214 (WIFYINLPIAGVSLVALGLFL), 233 to 253 (WGGSVLLIGSVTSIVLALSWG), and 261 to 281 (GWQTIVPLVIGLLALVAFFAY). A glycan (N-linked (GlcNAc...) asparagine) is linked at asparagine 299. 6 consecutive transmembrane segments (helical) span residues 305–325 (LLVISFIHSLLLYWVCYFLPV), 340–360 (VMLFPIACTSAPAGVAAGITI), 368–388 (VWHFTGFVLMSIACGLFTLLD), 401–421 (ILFGVGTGTVFTSTLPPILAS), 433–453 (AWTFIRNFGSIWGVAIPAAVF), and 509–529 (KVVWQVSLAFCLLGFILCFFV). A glycan (N-linked (GlcNAc...) asparagine) is linked at asparagine 553.

This sequence belongs to the major facilitator superfamily. TCR/Tet family.

The protein localises to the membrane. In terms of biological role, efflux pump; part of the gene cluster that mediates the biosynthesis of the mycotoxin fusarin C. Within the cluster, FUS1, FUS2, FUS8 and FUS9 are sufficient for fusarin production. The other FUS cluster members are not essential for fusarin C biosynthesis. The protein is Efflux pump FUS6 of Gibberella moniliformis (strain M3125 / FGSC 7600) (Maize ear and stalk rot fungus).